A 207-amino-acid chain; its full sequence is Transcriptional regulatory protein RcsA (207 aa).

Residues 131–196 (LTLPTLSLSK…VIYHIVRLTE (66 aa)) form the HTH luxR-type domain. Positions 155–174 (TSQISTQMNIKAKTVSSHKG) form a DNA-binding region, H-T-H motif.

The protein belongs to the RcsA family.

Its function is as follows. Component of the Rcs signaling system, which controls transcription of numerous genes. Binds to DNA to regulate expression of genes. The protein is Transcriptional regulatory protein RcsA of Klebsiella aerogenes (Enterobacter aerogenes).